Here is a 180-residue protein sequence, read N- to C-terminus: uncharacterized protein (180 aa).

2 coiled-coil regions span residues 3 to 82 (LKSL…QKIA) and 95 to 179 (REYE…EKYG).

This is an uncharacterized protein from Aquifex aeolicus (strain VF5).